The primary structure comprises 346 residues: D-alanine--D-alanine ligase (346 aa).

The ATP-grasp domain maps to 133-326; that stretch reads KFLAQKAGVK…LANSLPKERE (194 aa). 159–209 provides a ligand contact to ATP; that stretch reads YPIILKPARLGSSIGVSVVHDDSELAYAKDVAFEFDKDVLVEPFIKGVKEY. Positions 282, 294, and 296 each coordinate Mg(2+).

The protein belongs to the D-alanine--D-alanine ligase family. It depends on Mg(2+) as a cofactor. Mn(2+) serves as cofactor.

It localises to the cytoplasm. The enzyme catalyses 2 D-alanine + ATP = D-alanyl-D-alanine + ADP + phosphate + H(+). The protein operates within cell wall biogenesis; peptidoglycan biosynthesis. Cell wall formation. This is D-alanine--D-alanine ligase from Campylobacter concisus (strain 13826).